Reading from the N-terminus, the 435-residue chain is GTPase Der (435 aa).

2 consecutive EngA-type G domains span residues 4–167 (PVVA…PEKD) and 175–350 (IRFS…DNHN). Residues 10-17 (GRPNVGKS), 57-61 (DTGGI), 119-122 (NKAD), 181-188 (GRPNVGKS), 228-232 (DTAGI), and 293-296 (NKWD) contribute to the GTP site. The region spanning 351–435 (KRVQSATLND…PIHLIERARK (85 aa)) is the KH-like domain.

Belongs to the TRAFAC class TrmE-Era-EngA-EngB-Septin-like GTPase superfamily. EngA (Der) GTPase family. As to quaternary structure, associates with the 50S ribosomal subunit.

Its function is as follows. GTPase that plays an essential role in the late steps of ribosome biogenesis. The sequence is that of GTPase Der from Levilactobacillus brevis (strain ATCC 367 / BCRC 12310 / CIP 105137 / JCM 1170 / LMG 11437 / NCIMB 947 / NCTC 947) (Lactobacillus brevis).